We begin with the raw amino-acid sequence, 398 residues long: MHTVATSGPNASWGAPANASGCPGCGANASDGPVPSPRAVDAWLVPLFFAALMLLGLVGNSLVIYVICRHKPMRTVTNFYIANLAATDVTFLLCCVPFTALLYPLPGWVLGDFMCKFVNYIQQVSVQATCATLTAMSVDRWYVTVFPLRALHRRTPRLALAVSLSIWVGSAAVSAPVLALHRLSPGPRAYCSEAFPSRALERAFALYNLLALYLLPLLATCACYAAMLRHLGRVAVRPAPADSALQGQVLAERAGAVRAKVSRLVAAVVLLFAACWGPIQLFLVLQALGPAGSWHPRSYAAYALKTWAHCMSYSNSALNPLLYAFLGSHFRQAFRRVCPCAPRRPRRPRRPGPSDPAAPHAELLRLGSHPAPARAQKPGSSGLAARGLCVLGEDNAPL.

Over 1–46 the chain is Extracellular; the sequence is MHTVATSGPNASWGAPANASGCPGCGANASDGPVPSPRAVDAWLVP. Asparagine 10, asparagine 18, and asparagine 28 each carry an N-linked (GlcNAc...) asparagine glycan. Residues 47–67 traverse the membrane as a helical segment; the sequence is LFFAALMLLGLVGNSLVIYVI. The Cytoplasmic segment spans residues 68 to 78; sequence CRHKPMRTVTN. Residues 79–101 traverse the membrane as a helical segment; that stretch reads FYIANLAATDVTFLLCCVPFTAL. The Extracellular portion of the chain corresponds to 102–120; that stretch reads LYPLPGWVLGDFMCKFVNY. Residues cysteine 115 and cysteine 191 are joined by a disulfide bond. The helical transmembrane segment at 121 to 138 threads the bilayer; sequence IQQVSVQATCATLTAMSV. The Cytoplasmic segment spans residues 139–157; the sequence is DRWYVTVFPLRALHRRTPR. A helical transmembrane segment spans residues 158 to 178; that stretch reads LALAVSLSIWVGSAAVSAPVL. At 179 to 202 the chain is on the extracellular side; it reads ALHRLSPGPRAYCSEAFPSRALER. A helical transmembrane segment spans residues 203–223; the sequence is AFALYNLLALYLLPLLATCAC. The Cytoplasmic segment spans residues 224–263; it reads YAAMLRHLGRVAVRPAPADSALQGQVLAERAGAVRAKVSR. Residues 264–284 traverse the membrane as a helical segment; it reads LVAAVVLLFAACWGPIQLFLV. Topologically, residues 285–305 are extracellular; it reads LQALGPAGSWHPRSYAAYALK. A helical transmembrane segment spans residues 306-328; that stretch reads TWAHCMSYSNSALNPLLYAFLGS. Topologically, residues 329 to 398 are cytoplasmic; that stretch reads HFRQAFRRVC…CVLGEDNAPL (70 aa). Residues 341–363 are disordered; that stretch reads APRRPRRPRRPGPSDPAAPHAEL.

It belongs to the G-protein coupled receptor 1 family. In terms of tissue distribution, most highly expressed in the pancreas, placenta and spinal cord, with lower-level of expression in peripheral blood leukocytes, kidney, lung, fetal liver, stomach, small intestine, testes, spleen, thymus, adrenal glands and lymph nodes. In the adult brain, expressed in the superior frontal gyrus, putamen, caudate nucleus, cingulate gyrus, nucleus accumbens, hippocampus, pons and amygdala, as well as the hypothalamus and pituitary. Expression levels are higher in early (7-9 weeks) than term placentas. Expression levels were increased in both early placentas and molar pregnancies and were reduced in choriocarcinoma cells. Expressed at higher levels in first trimester trophoblasts than at term of gestation. Also found in the extravillous trophoblast suggesting endocrine/paracrine activation mechanism.

It localises to the cell membrane. Receptor for metastin (kisspeptin-54 or kp-54), a C-terminally amidated peptide of KiSS1. KiSS1 is a metastasis suppressor protein that suppresses metastases in malignant melanomas and in some breast carcinomas without affecting tumorigenicity. The metastasis suppressor properties may be mediated in part by cell cycle arrest and induction of apoptosis in malignant cells. The receptor is essential for normal gonadotropin-released hormone physiology and for puberty. The hypothalamic KiSS1/KISS1R system is a pivotal factor in central regulation of the gonadotropic axis at puberty and in adulthood. The receptor is also probably involved in the regulation and fine-tuning of trophoblast invasion generated by the trophoblast itself. Analysis of the transduction pathways activated by the receptor identifies coupling to phospholipase C and intracellular calcium release through pertussis toxin-insensitive G(q) proteins. The polypeptide is KiSS-1 receptor (KISS1R) (Homo sapiens (Human)).